The chain runs to 128 residues: Small ribosomal subunit protein uS10 (128 aa).

Belongs to the universal ribosomal protein uS10 family.

In Oryza sativa subsp. japonica (Rice), this protein is Small ribosomal subunit protein uS10 (RPS20).